The sequence spans 212 residues: Probable transaldolase (212 aa).

The Schiff-base intermediate with substrate role is filled by lysine 84.

This sequence belongs to the transaldolase family. Type 3B subfamily.

It is found in the cytoplasm. The enzyme catalyses D-sedoheptulose 7-phosphate + D-glyceraldehyde 3-phosphate = D-erythrose 4-phosphate + beta-D-fructose 6-phosphate. It participates in carbohydrate degradation; pentose phosphate pathway; D-glyceraldehyde 3-phosphate and beta-D-fructose 6-phosphate from D-ribose 5-phosphate and D-xylulose 5-phosphate (non-oxidative stage): step 2/3. In terms of biological role, transaldolase is important for the balance of metabolites in the pentose-phosphate pathway. This Bacillus velezensis (strain DSM 23117 / BGSC 10A6 / LMG 26770 / FZB42) (Bacillus amyloliquefaciens subsp. plantarum) protein is Probable transaldolase.